We begin with the raw amino-acid sequence, 298 residues long: Cyclin-C (298 aa).

Residues 46–162 enclose the Cyclin N-terminal domain; it reads NFITAVATEC…ILDCCLVVHH (117 aa). The disordered stretch occupies residues 278–298; that stretch reads KLPKPNTPIPPPQQQQSSYHM.

Belongs to the cyclin family. Cyclin C subfamily. In terms of assembly, component of the Mediator complex.

It is found in the nucleus. In terms of biological role, component of the Mediator complex, a coactivator involved in regulated gene transcription of nearly all RNA polymerase II-dependent genes. Mediator functions as a bridge to convey information from gene-specific regulatory proteins to the basal RNA polymerase II transcription machinery. Mediator is recruited to promoters by direct interactions with regulatory proteins and serves as a scaffold for the assembly of a functional preinitiation complex with RNA polymerase II and the general transcription factors. Binds to and activates cyclin-dependent kinase cdk-8 that phosphorylates the CTD (C-terminal domain) of the large subunit of RNA polymerase II (RNAp II), which may inhibit the formation of a transcription initiation complex. The chain is Cyclin-C (cic-1) from Caenorhabditis briggsae.